A 503-amino-acid chain; its full sequence is Na(+)-translocating NADH-quinone reductase subunit B (503 aa).

Helical transmembrane passes span 55 to 75 (MILV…NSGV), 120 to 142 (IFLP…FAVI), 161 to 181 (TLPP…GVVV), and 186 to 206 (FGGT…FLFF). Residue T248 is modified to FMN phosphoryl threonine. 5 helical membrane-spanning segments follow: residues 361 to 381 (TSTF…IASW), 387 to 407 (FGIG…LIVG), 417 to 437 (FFIP…LVFM), 452 to 472 (WIYG…NPAY), and 475 to 495 (GVML…YFAV).

This sequence belongs to the NqrB/RnfD family. In terms of assembly, composed of six subunits; NqrA, NqrB, NqrC, NqrD, NqrE and NqrF. Requires FMN as cofactor.

Its subcellular location is the cell inner membrane. It carries out the reaction a ubiquinone + n Na(+)(in) + NADH + H(+) = a ubiquinol + n Na(+)(out) + NAD(+). Functionally, NQR complex catalyzes the reduction of ubiquinone-1 to ubiquinol by two successive reactions, coupled with the transport of Na(+) ions from the cytoplasm to the periplasm. NqrA to NqrE are probably involved in the second step, the conversion of ubisemiquinone to ubiquinol. This chain is Na(+)-translocating NADH-quinone reductase subunit B, found in Chlamydia felis (strain Fe/C-56) (Chlamydophila felis).